Here is a 144-residue protein sequence, read N- to C-terminus: Transcription antitermination protein NusB (144 aa).

It belongs to the NusB family.

Involved in transcription antitermination. Required for transcription of ribosomal RNA (rRNA) genes. Binds specifically to the boxA antiterminator sequence of the ribosomal RNA (rrn) operons. The protein is Transcription antitermination protein NusB of Buchnera aphidicola subsp. Baizongia pistaciae (strain Bp).